Consider the following 305-residue polypeptide: Sulfate adenylyltransferase subunit 2 (305 aa).

It belongs to the PAPS reductase family. CysD subfamily. As to quaternary structure, heterodimer composed of CysD, the smaller subunit, and CysN.

The catalysed reaction is sulfate + ATP + H(+) = adenosine 5'-phosphosulfate + diphosphate. It functions in the pathway sulfur metabolism; hydrogen sulfide biosynthesis; sulfite from sulfate: step 1/3. Its function is as follows. With CysN forms the ATP sulfurylase (ATPS) that catalyzes the adenylation of sulfate producing adenosine 5'-phosphosulfate (APS) and diphosphate, the first enzymatic step in sulfur assimilation pathway. APS synthesis involves the formation of a high-energy phosphoric-sulfuric acid anhydride bond driven by GTP hydrolysis by CysN coupled to ATP hydrolysis by CysD. This Stutzerimonas stutzeri (strain A1501) (Pseudomonas stutzeri) protein is Sulfate adenylyltransferase subunit 2.